Consider the following 68-residue polypeptide: Large ribosomal subunit protein uL29 (68 aa).

Belongs to the universal ribosomal protein uL29 family.

This is Large ribosomal subunit protein uL29 (rpl29) from Thermoplasma acidophilum (strain ATCC 25905 / DSM 1728 / JCM 9062 / NBRC 15155 / AMRC-C165).